A 551-amino-acid chain; its full sequence is Calnexin homolog (551 aa).

Positions 1 to 26 (MVDRKEIPLAMGLLAVLLFFVASSSS) are cleaved as a signal peptide. Topologically, residues 27–480 (FHLVRASDEV…EKGEKQPNLT (454 aa)) are lumenal. Residues Ser44 and Asp75 each coordinate Ca(2+). A disulfide bridge connects residues Cys118 and Cys153. An alpha-D-glucoside is bound by residues Tyr122 and Lys124. N-linked (GlcNAc...) asparagine glycosylation occurs at Asn140. Tyr144 and Asp151 together coordinate an alpha-D-glucoside. Residues 226-330 (ALIPSKTIPD…CGEWKRPTKS (105 aa)) are disordered. Residues 233–364 (IPDPDDKKPE…QEIPNPEYFE (132 aa)) are p domain (Extended arm). Basic and acidic residues-rich tracts occupy residues 234 to 269 (PDPDDKKPEDWDERAKIPDPEAVKPEDWDEDAPREI) and 276 to 295 (KPEPWLDHEPEVDDPEAKPE). Repeat copies occupy residues 235-246 (DPDDKKPEDWDE), 252-263 (DPEAVKPEDWDE), 271-282 (DEEAEKPEPWLD), 289-299 (DPEAKPEDWDD), and 303-313 (GEWEAPKIENP). 4 X approximate repeats regions lie at residues 235–299 (DPDD…DWDD) and 303–360 (GEWE…IPNP). Positions 296–305 (DWDDEEDGEW) are enriched in acidic residues. A disulfide bridge links Cys315 with Cys321. 3 tandem repeats follow at residues 322–332 (GEWKRPTKSNP), 336–346 (GKWSAPYIDNP), and 350–360 (GIWKPQEIPNP). Residue Glu379 participates in an alpha-D-glucoside binding. Asp390 provides a ligand contact to Ca(2+). A glycan (N-linked (GlcNAc...) asparagine) is linked at Asn478. A helical membrane pass occupies residues 481-501 (IGIIVSVVIVFVSIFFRLIFG). The Cytoplasmic segment spans residues 502–551 (GKKPANVEANVEKKKTNTETTSKQDGGEKEDNKEKEETANPPRRRPKRDN). The segment at 510–551 (ANVEKKKTNTETTSKQDGGEKEDNKEKEETANPPRRRPKRDN) is disordered. The span at 526–539 (DGGEKEDNKEKEET) shows a compositional bias: basic and acidic residues.

The protein belongs to the calreticulin family. In terms of tissue distribution, in vegetative and flowering tissues.

The protein localises to the endoplasmic reticulum membrane. Calcium-binding protein that interacts with newly synthesized monoglucosylated glycoproteins in the endoplasmic reticulum. It may act in assisting protein assembly and/or in the retention within the ER of unassembled protein subunits. It seems to play a major role in the quality control apparatus of the ER by the retention of incorrectly folded proteins. This Pisum sativum (Garden pea) protein is Calnexin homolog.